Reading from the N-terminus, the 177-residue chain is Large ribosomal subunit protein uL6 (177 aa).

It belongs to the universal ribosomal protein uL6 family. As to quaternary structure, part of the 50S ribosomal subunit.

In terms of biological role, this protein binds to the 23S rRNA, and is important in its secondary structure. It is located near the subunit interface in the base of the L7/L12 stalk, and near the tRNA binding site of the peptidyltransferase center. The polypeptide is Large ribosomal subunit protein uL6 (Brucella melitensis biotype 1 (strain ATCC 23456 / CCUG 17765 / NCTC 10094 / 16M)).